Reading from the N-terminus, the 224-residue chain is Endonuclease NucS (224 aa).

This sequence belongs to the NucS endonuclease family.

It localises to the cytoplasm. Its function is as follows. Cleaves both 3' and 5' ssDNA extremities of branched DNA structures. This is Endonuclease NucS from Mycolicibacterium smegmatis (strain ATCC 700084 / mc(2)155) (Mycobacterium smegmatis).